A 660-amino-acid polypeptide reads, in one-letter code: Acetyl-coenzyme A synthetase (660 aa).

Residues 197–200 (RGGK) and T317 each bind CoA. ATP is bound by residues 397-399 (GEP), 421-426 (DTWWQT), D512, and R528. S536 is a CoA binding site. R539 is an ATP binding site. Positions 550 and 555 each coordinate Mg(2+). Position 625 is an N6-acetyllysine (K625).

The protein belongs to the ATP-dependent AMP-binding enzyme family. The cofactor is Mg(2+). In terms of processing, acetylated. Deacetylation by the SIR2-homolog deacetylase activates the enzyme.

The enzyme catalyses acetate + ATP + CoA = acetyl-CoA + AMP + diphosphate. Functionally, catalyzes the conversion of acetate into acetyl-CoA (AcCoA), an essential intermediate at the junction of anabolic and catabolic pathways. AcsA undergoes a two-step reaction. In the first half reaction, AcsA combines acetate with ATP to form acetyl-adenylate (AcAMP) intermediate. In the second half reaction, it can then transfer the acetyl group from AcAMP to the sulfhydryl group of CoA, forming the product AcCoA. This chain is Acetyl-coenzyme A synthetase, found in Paraburkholderia phymatum (strain DSM 17167 / CIP 108236 / LMG 21445 / STM815) (Burkholderia phymatum).